Reading from the N-terminus, the 169-residue chain is Mitochondrial ATP-independent inner membrane protease subunit 1b (169 aa).

Active-site residues include serine 47 and lysine 91.

Belongs to the peptidase S26 family. IMP1 subfamily. As to quaternary structure, heterodimer of 2 subunits, IMP1A/B and IMP12.

It localises to the mitochondrion inner membrane. Functionally, catalyzes the removal of transit peptides required for the targeting of proteins from the mitochondrial matrix, across the inner membrane, into the inter-membrane space. The protein is Mitochondrial ATP-independent inner membrane protease subunit 1b of Arabidopsis thaliana (Mouse-ear cress).